Reading from the N-terminus, the 147-residue chain is Small ribosomal subunit protein uS12 (147 aa).

The protein belongs to the universal ribosomal protein uS12 family. Part of the 30S ribosomal subunit.

In terms of biological role, with S4 and S5 plays an important role in translational accuracy. Located at the interface of the 30S and 50S subunits. The chain is Small ribosomal subunit protein uS12 from Ignicoccus hospitalis (strain KIN4/I / DSM 18386 / JCM 14125).